Reading from the N-terminus, the 95-residue chain is Co-chaperonin GroES (95 aa).

The protein belongs to the GroES chaperonin family. In terms of assembly, heptamer of 7 subunits arranged in a ring. Interacts with the chaperonin GroEL.

The protein localises to the cytoplasm. In terms of biological role, together with the chaperonin GroEL, plays an essential role in assisting protein folding. The GroEL-GroES system forms a nano-cage that allows encapsulation of the non-native substrate proteins and provides a physical environment optimized to promote and accelerate protein folding. GroES binds to the apical surface of the GroEL ring, thereby capping the opening of the GroEL channel. This chain is Co-chaperonin GroES, found in Stenotrophomonas maltophilia (strain R551-3).